A 1313-amino-acid chain; its full sequence is Inter-alpha-trypsin inhibitor heavy chain H6 (1313 aa).

An N-terminal signal peptide occupies residues 1–23 (MSGWRYLICVSFLLTILLELTYQ). One can recognise a VIT domain in the interval 24 to 150 (GPPVPASSST…EVTFSLAYEE (127 aa)). N-linked (GlcNAc...) asparagine glycosylation is found at asparagine 83, asparagine 374, asparagine 540, and asparagine 594. Positions 283-469 (NVVFVIDVSS…LQLKGLYEEI (187 aa)) constitute a VWFA domain. Disordered stretches follow at residues 612–644 (QPKQ…HGLG), 783–817 (HSKP…TLQV), 856–928 (LKPS…EPLP), and 959–983 (PSRP…SPPN). The segment covering 623 to 640 (QTSTSAGPDTIMPSSSSR) has biased composition (polar residues). The span at 864 to 875 (QISTSISLSKPE) shows a compositional bias: polar residues. The segment covering 876–888 (TPNPHMPQTPLPP) has biased composition (pro residues). The span at 907–921 (TISSSTGPSSTTTTS) shows a compositional bias: low complexity. N-linked (GlcNAc...) asparagine glycosylation is found at asparagine 971 and asparagine 1231.

The protein belongs to the ITIH family.

It is found in the secreted. In Homo sapiens (Human), this protein is Inter-alpha-trypsin inhibitor heavy chain H6 (ITIH6).